Reading from the N-terminus, the 823-residue chain is Degenerin-like protein asic-1 (823 aa).

Topologically, residues 1–38 are cytoplasmic; sequence MGKNSLKRALELDVVDFAEHTSAHGIPRAYVSTGWRRY. Residues 39-59 traverse the membrane as a helical segment; that stretch reads MWLLCFLFCLSCFGHQAYLIV. Topologically, residues 60-767 are extracellular; sequence ERFNRNDIIV…FGGQLGLWMG (708 aa). 2 disulfides stabilise this stretch: Cys86-Cys518 and Cys494-Cys501. Residues Asn228, Asn326, Asn347, Asn415, and Asn486 are each glycosylated (N-linked (GlcNAc...) asparagine). Residues Asn527 and Asn546 are each glycosylated (N-linked (GlcNAc...) asparagine). 4 cysteine pairs are disulfide-bonded: Cys604/Cys687, Cys625/Cys683, Cys629/Cys681, and Cys638/Cys664. Residues 767 to 769 carry the GAS motif; ion selectivity filter motif; the sequence is GVS. Residues 768–788 form a helical membrane-spanning segment; it reads VSVITIGEVACFFFEVFISLI. At 789 to 795 the chain is on the cytoplasmic side; that stretch reads SSNRTKR.

It belongs to the amiloride-sensitive sodium channel (TC 1.A.6) family. As to quaternary structure, homotrimer. Heterotrimer; with other ASIC proteins producing channel with different properties.

The protein resides in the cell membrane. It is found in the postsynaptic cell membrane. Its subcellular location is the cell projection. The protein localises to the dendrite. The enzyme catalyses Na(+)(in) = Na(+)(out). The catalysed reaction is K(+)(in) = K(+)(out). It carries out the reaction Li(+)(in) = Li(+)(out). It catalyses the reaction Ca(2+)(in) = Ca(2+)(out). Forms voltage-independent, pH-gated trimeric sodium channels that act as postsynaptic excitatory receptors in the nervous system, playing a crucial role in regulating synaptic plasticity, learning, and memory. Promotes synaptic vesicle fusion to positively regulate the release of dopamine at dopaminergic neuron synapses. Displays high selectivity for sodium ions but can also permit the permeation of other cations. This Caenorhabditis elegans protein is Degenerin-like protein asic-1.